We begin with the raw amino-acid sequence, 435 residues long: Ras association domain-containing protein 9 (435 aa).

Residues 1-22 (MAPFGRNLLKTRHKNRSPTKDM) form a disordered region. The 95-residue stretch at 25–119 (EEKEIVVWVC…MQFVLVKTDA (95 aa)) folds into the Ras-associating domain. Positions 195 to 291 (HTIHQQVQRM…KLSAEIEREV (97 aa)) form a coiled coil. Residues 371–423 (SKDGCQGKENRGKEAEASSSNGEIPPLTQRVFNTYTNDTDSDTGISSNHSQDS) are disordered. A compositionally biased stretch (basic and acidic residues) spans 375–386 (CQGKENRGKEAE). A compositionally biased stretch (polar residues) spans 400-423 (RVFNTYTNDTDSDTGISSNHSQDS).

As to quaternary structure, interacts with PAM. As to expression, testis, kidney, skeletal muscle, liver, lung, brain, heart, pituitary gland, adrenal gland and ovary.

It is found in the endosome. May play a role in regulating vesicuar trafficking in cells. This is Ras association domain-containing protein 9 (Rassf9) from Rattus norvegicus (Rat).